The chain runs to 612 residues: Chaperone protein DnaK (612 aa).

Thr-174 is modified (phosphothreonine; by autocatalysis). Residues 578-612 (GAQAGAQGQGAAGGQKQDGNVYDADYKVVDDDKKE) form a disordered region. Over residues 601 to 612 (ADYKVVDDDKKE) the composition is skewed to basic and acidic residues.

Belongs to the heat shock protein 70 family.

In terms of biological role, acts as a chaperone. This Moorella thermoacetica (strain ATCC 39073 / JCM 9320) protein is Chaperone protein DnaK.